The chain runs to 98 residues: Large ribosomal subunit protein uL23 (98 aa).

The protein belongs to the universal ribosomal protein uL23 family. In terms of assembly, part of the 50S ribosomal subunit. Contacts protein L29, and trigger factor when it is bound to the ribosome.

Its function is as follows. One of the early assembly proteins it binds 23S rRNA. One of the proteins that surrounds the polypeptide exit tunnel on the outside of the ribosome. Forms the main docking site for trigger factor binding to the ribosome. The sequence is that of Large ribosomal subunit protein uL23 from Cereibacter sphaeroides (strain ATCC 17025 / ATH 2.4.3) (Rhodobacter sphaeroides).